The primary structure comprises 426 residues: Glucan endo-1,3-beta-glucosidase 11 (426 aa).

Residues 1 to 30 (MELTSFHRSSLLFLISLTLIILPTTTTSIG) form the signal peptide. N112 carries an N-linked (GlcNAc...) asparagine glycan. E121 acts as the Proton donor in catalysis. The N-linked (GlcNAc...) asparagine glycan is linked to N126. The active-site Nucleophile is E266. Over residues 360–372 (GGGTGGGNSSSGG) the composition is skewed to gly residues. Residues 360 to 389 (GGGTGGGNSSSGGGRDKSPVFPVSPVAPDS) form a disordered region. A glycan (N-linked (GlcNAc...) asparagine) is linked at N367. Residue S398 is the site of GPI-anchor amidated serine attachment. The propeptide at 399-426 (ASPVTGKRKGKGAILSLVVSMLLARHLL) is removed in mature form.

The protein belongs to the glycosyl hydrolase 17 family.

It localises to the secreted. Its subcellular location is the cell wall. It is found in the cell membrane. The catalysed reaction is Hydrolysis of (1-&gt;3)-beta-D-glucosidic linkages in (1-&gt;3)-beta-D-glucans.. This Arabidopsis thaliana (Mouse-ear cress) protein is Glucan endo-1,3-beta-glucosidase 11.